Consider the following 49-residue polypeptide: Osteocalcin (49 aa).

The Gla domain occupies 1–47; the sequence is YLDSGLGAPVPYPDPLEPKREVCELNPNCDELADHIGFQEAYQRFYG. The Ca(2+) site is built by Glu17, Glu21, Glu24, and Asp30. Residues Glu17, Glu21, and Glu24 each carry the 4-carboxyglutamate modification. A disulfide bridge links Cys23 with Cys29.

This sequence belongs to the osteocalcin/matrix Gla protein family. In terms of processing, gamma-carboxyglutamate residues are formed by vitamin K dependent carboxylation by GGCX. These residues are essential for the binding of calcium. Decarboxylation promotes the hormone activity.

It is found in the secreted. The carboxylated form is one of the main organic components of the bone matrix, which constitutes 1-2% of the total bone protein. It acts as a negative regulator of bone formation and is required to limit bone formation without impairing bone resorption or mineralization. The carboxylated form binds strongly to apatite and calcium. Its function is as follows. The uncarboxylated form acts as a hormone secreted by osteoblasts, which regulates different cellular processes, such as energy metabolism, male fertility and brain development. Regulates of energy metabolism by acting as a hormone favoring pancreatic beta-cell proliferation, insulin secretion and sensitivity and energy expenditure. Uncarboxylated osteocalcin hormone also promotes testosterone production in the testes: acts as a ligand for G protein-coupled receptor GPRC6A at the surface of Leydig cells, initiating a signaling response that promotes the expression of enzymes required for testosterone synthesis in a CREB-dependent manner. Also acts as a regulator of brain development: osteocalcin hormone crosses the blood-brain barrier and acts as a ligand for GPR158 on neurons, initiating a signaling response that prevents neuronal apoptosis in the hippocampus, favors the synthesis of all monoamine neurotransmitters and inhibits that of gamma-aminobutyric acid (GABA). Osteocalcin also crosses the placenta during pregnancy and maternal osteocalcin is required for fetal brain development. This is Osteocalcin (BGLAP) from Canis lupus familiaris (Dog).